Here is a 429-residue protein sequence, read N- to C-terminus: Adenylosuccinate synthetase (429 aa).

GTP is bound by residues 13–19 (GDEGKGK) and 41–43 (GHT). The active-site Proton acceptor is the Asp-14. 2 residues coordinate Mg(2+): Asp-14 and Gly-41. IMP contacts are provided by residues 14-17 (DEGK), 39-42 (NAGH), Thr-130, Arg-144, Gln-225, Thr-240, and Arg-304. The active-site Proton donor is His-42. 300-306 (ATTGRAR) is a substrate binding site. Residues Arg-306, 332–334 (KLD), and 413–415 (STG) each bind GTP.

The protein belongs to the adenylosuccinate synthetase family. In terms of assembly, homodimer. It depends on Mg(2+) as a cofactor.

Its subcellular location is the cytoplasm. The catalysed reaction is IMP + L-aspartate + GTP = N(6)-(1,2-dicarboxyethyl)-AMP + GDP + phosphate + 2 H(+). The protein operates within purine metabolism; AMP biosynthesis via de novo pathway; AMP from IMP: step 1/2. Functionally, plays an important role in the de novo pathway of purine nucleotide biosynthesis. Catalyzes the first committed step in the biosynthesis of AMP from IMP. The chain is Adenylosuccinate synthetase from Pseudomonas fluorescens (strain SBW25).